The following is a 376-amino-acid chain: N-acetyldiaminopimelate deacetylase (376 aa).

Residue D69 is part of the active site. Residue E128 is the Proton acceptor of the active site.

The protein belongs to the peptidase M20A family. N-acetyldiaminopimelate deacetylase subfamily.

The enzyme catalyses N-acetyl-(2S,6S)-2,6-diaminopimelate + H2O = (2S,6S)-2,6-diaminopimelate + acetate. It functions in the pathway amino-acid biosynthesis; L-lysine biosynthesis via DAP pathway; LL-2,6-diaminopimelate from (S)-tetrahydrodipicolinate (acetylase route): step 3/3. Functionally, catalyzes the conversion of N-acetyl-diaminopimelate to diaminopimelate and acetate. The chain is N-acetyldiaminopimelate deacetylase from Streptococcus pneumoniae (strain CGSP14).